Here is a 250-residue protein sequence, read N- to C-terminus: Pyrroloquinoline-quinone synthase (250 aa).

The protein belongs to the PqqC family.

It carries out the reaction 6-(2-amino-2-carboxyethyl)-7,8-dioxo-1,2,3,4,7,8-hexahydroquinoline-2,4-dicarboxylate + 3 O2 = pyrroloquinoline quinone + 2 H2O2 + 2 H2O + H(+). The protein operates within cofactor biosynthesis; pyrroloquinoline quinone biosynthesis. Ring cyclization and eight-electron oxidation of 3a-(2-amino-2-carboxyethyl)-4,5-dioxo-4,5,6,7,8,9-hexahydroquinoline-7,9-dicarboxylic-acid to PQQ. This chain is Pyrroloquinoline-quinone synthase, found in Xanthomonas campestris pv. campestris (strain 8004).